The primary structure comprises 377 residues: Lactosylceramide 1,3-N-acetyl-beta-D-glucosaminyltransferase (377 aa).

The Cytoplasmic segment spans residues 1-14 (MRVFVSSRRVKRWQ). Residues 15–35 (FFHLFAICFILSFMVFWGPIN) traverse the membrane as a helical; Signal-anchor for type II membrane protein segment. The Lumenal portion of the chain corresponds to 36-377 (NYIMSHMKSY…NSYPCRAAFA (342 aa)). Asn58 carries N-linked (GlcNAc...) asparagine glycosylation.

The protein belongs to the glycosyltransferase 31 family.

The protein resides in the golgi apparatus membrane. The enzyme catalyses a beta-D-Gal-(1-&gt;4)-beta-D-Glc-(1&lt;-&gt;1)-Cer(d18:1(4E)) + UDP-N-acetyl-alpha-D-glucosamine = a beta-D-GlcNAc-(1-&gt;3)-beta-D-Gal-(1-&gt;4)-beta-D-Glc-(1&lt;-&gt;1)-Cer(d18:1(4E)) + UDP + H(+). It carries out the reaction a neolactoside nLc4Cer(d18:1(4E)) + UDP-N-acetyl-alpha-D-glucosamine = a neolactoside IV(3)-beta-GlcNAc-nLc4Cer(d18:1(4E)) + UDP + H(+). The protein operates within protein modification; protein glycosylation. Its function is as follows. Beta-1,3-N-acetylglucosaminyltransferase that plays a key role in the synthesis of lacto- or neolacto-series carbohydrate chains on glycolipids, notably by participating in biosynthesis of HNK-1 and Lewis X carbohydrate structures. Has strong activity toward lactosylceramide (LacCer) and neolactotetraosylceramide (nLc(4)Cer; paragloboside), resulting in the synthesis of Lc(3)Cer and neolactopentaosylceramide (nLc(5)Cer), respectively. Probably plays a central role in regulating neolacto-series glycolipid synthesis during embryonic development. This is Lactosylceramide 1,3-N-acetyl-beta-D-glucosaminyltransferase from Rattus norvegicus (Rat).